Here is a 496-residue protein sequence, read N- to C-terminus: Pre-glycoprotein polyprotein GP complex (496 aa).

A lipid anchor (N-myristoyl glycine; by host) is attached at glycine 2. The Extracellular portion of the chain corresponds to 2–17; it reads GQLISFFQEIPVFLQE. The chain crosses the membrane as a helical span at residues 18–32; sequence ALNIALVAVSLIAVI. Position 33 (lysine 33) is a topological domain, cytoplasmic. A helical membrane pass occupies residues 34–53; the sequence is GIINLYKSGLFQFIFFLLLA. Extracellular-facing segments span residues 54–58 and 59–435; these read GRSCS and DGTF…TLVD. Cysteine 57 is a binding site for Zn(2+). Asparagine 83, asparagine 95, asparagine 137, asparagine 166, and asparagine 178 each carry an N-linked (GlcNAc...) asparagine; by host glycan. 6 disulfides stabilise this stretch: cysteine 92/cysteine 237, cysteine 135/cysteine 164, cysteine 207/cysteine 213, cysteine 282/cysteine 295, cysteine 304/cysteine 313, and cysteine 367/cysteine 388. Asparagine 368, asparagine 376, asparagine 393, and asparagine 398 each carry an N-linked (GlcNAc...) asparagine; by host glycan. Residues 436–456 traverse the membrane as a helical segment; that stretch reads ICFWSTVFFTASLFLHLVGIP. Residues 457 to 496 lie on the Cytoplasmic side of the membrane; sequence THRHLKGEACPLPHKLDSFGGCRCGKYPRLRKPTIWHKRH. Residues histidine 458, histidine 460, cysteine 466, histidine 470, cysteine 478, cysteine 480, and histidine 496 each coordinate Zn(2+).

It belongs to the arenaviridae GPC protein family. Homotetramer; disulfide-linked. Interacts with host TFRC. As to quaternary structure, homotetramer. GP2 homotetramers bind through ionic interactions with GP1 homotetramers to form the GP complex together with the stable signal peptide. The GP-C polyprotein interacts with the host protease MBTPS1/SKI-1 resulting in the polyprotein processing. Post-translationally, specific enzymatic cleavages in vivo yield mature proteins. GP-C polyprotein is cleaved in the endoplasmic reticulum by the host protease MBTPS1. Only cleaved glycoprotein is incorporated into virions. In terms of processing, the SSP remains stably associated with the GP complex following cleavage by signal peptidase and plays crucial roles in the trafficking of GP through the secretory pathway. Myristoylation is necessary for GP2-mediated fusion activity.

It localises to the virion membrane. The protein localises to the host endoplasmic reticulum membrane. It is found in the host Golgi apparatus membrane. The protein resides in the host cell membrane. Its function is as follows. Class I viral fusion protein that directs fusion of viral and host endosomal membranes, leading to delivery of the nucleocapsid into the cytoplasm. Membrane fusion is mediated by irreversible conformational changes induced upon acidification in the endosome. Functionally, stable signal peptide (SSP): cleaved and functions as a signal peptide. In addition, it is also retained as the third component of the GP complex. The SSP is required for efficient glycoprotein expression, post-translational maturation cleavage of GP1 and GP2, glycoprotein transport to the cell surface plasma membrane, formation of infectious virus particles, and acid pH-dependent glycoprotein-mediated cell fusion. Interacts with the host receptor. Mediates virus attachment to host TFRC. This attachment induces virion internalization predominantly through clathrin-mediated endocytosis. This Machupo virus (MACV) protein is Pre-glycoprotein polyprotein GP complex.